A 240-amino-acid chain; its full sequence is UDP-2,3-diacylglucosamine hydrolase (240 aa).

Mn(2+) is bound by residues aspartate 8, histidine 10, aspartate 41, asparagine 79, and histidine 114. 79–80 (NR) serves as a coordination point for substrate. Substrate contacts are provided by aspartate 122, serine 160, asparagine 164, lysine 167, and histidine 195. Mn(2+)-binding residues include histidine 195 and histidine 197.

The protein belongs to the LpxH family. Mn(2+) serves as cofactor.

Its subcellular location is the cell inner membrane. The catalysed reaction is UDP-2-N,3-O-bis[(3R)-3-hydroxytetradecanoyl]-alpha-D-glucosamine + H2O = 2-N,3-O-bis[(3R)-3-hydroxytetradecanoyl]-alpha-D-glucosaminyl 1-phosphate + UMP + 2 H(+). It functions in the pathway glycolipid biosynthesis; lipid IV(A) biosynthesis; lipid IV(A) from (3R)-3-hydroxytetradecanoyl-[acyl-carrier-protein] and UDP-N-acetyl-alpha-D-glucosamine: step 4/6. Its function is as follows. Hydrolyzes the pyrophosphate bond of UDP-2,3-diacylglucosamine to yield 2,3-diacylglucosamine 1-phosphate (lipid X) and UMP by catalyzing the attack of water at the alpha-P atom. Involved in the biosynthesis of lipid A, a phosphorylated glycolipid that anchors the lipopolysaccharide to the outer membrane of the cell. The sequence is that of UDP-2,3-diacylglucosamine hydrolase from Escherichia coli O6:K15:H31 (strain 536 / UPEC).